A 215-amino-acid chain; its full sequence is Imidazole glycerol phosphate synthase subunit HisH (215 aa).

Residues 8 to 215 (KVVVFDYGFG…QLLNNWIGTL (208 aa)) form the Glutamine amidotransferase type-1 domain. Cysteine 86 serves as the catalytic Nucleophile. Catalysis depends on residues histidine 196 and glutamate 198.

Heterodimer of HisH and HisF.

It localises to the cytoplasm. It carries out the reaction 5-[(5-phospho-1-deoxy-D-ribulos-1-ylimino)methylamino]-1-(5-phospho-beta-D-ribosyl)imidazole-4-carboxamide + L-glutamine = D-erythro-1-(imidazol-4-yl)glycerol 3-phosphate + 5-amino-1-(5-phospho-beta-D-ribosyl)imidazole-4-carboxamide + L-glutamate + H(+). The catalysed reaction is L-glutamine + H2O = L-glutamate + NH4(+). It functions in the pathway amino-acid biosynthesis; L-histidine biosynthesis; L-histidine from 5-phospho-alpha-D-ribose 1-diphosphate: step 5/9. Functionally, IGPS catalyzes the conversion of PRFAR and glutamine to IGP, AICAR and glutamate. The HisH subunit catalyzes the hydrolysis of glutamine to glutamate and ammonia as part of the synthesis of IGP and AICAR. The resulting ammonia molecule is channeled to the active site of HisF. The sequence is that of Imidazole glycerol phosphate synthase subunit HisH from Streptomyces avermitilis (strain ATCC 31267 / DSM 46492 / JCM 5070 / NBRC 14893 / NCIMB 12804 / NRRL 8165 / MA-4680).